A 348-amino-acid chain; its full sequence is Spermidine/putrescine import ATP-binding protein PotA (348 aa).

The ABC transporter domain occupies 6–236 (IRLVNVTKEY…PKNVFVADFI (231 aa)). ATP is bound at residue 38–45 (GPSGCGKT).

The protein belongs to the ABC transporter superfamily. Spermidine/putrescine importer (TC 3.A.1.11.1) family. In terms of assembly, the complex is composed of two ATP-binding proteins (PotA), two transmembrane proteins (PotB and PotC) and a solute-binding protein (PotD).

The protein localises to the cell membrane. It catalyses the reaction ATP + H2O + polyamine-[polyamine-binding protein]Side 1 = ADP + phosphate + polyamineSide 2 + [polyamine-binding protein]Side 1.. Part of the ABC transporter complex PotABCD involved in spermidine/putrescine import. Responsible for energy coupling to the transport system. The sequence is that of Spermidine/putrescine import ATP-binding protein PotA from Desulfitobacterium hafniense (strain Y51).